Consider the following 781-residue polypeptide: Ubiquitin carboxyl-terminal hydrolase 14 (781 aa).

The UBP-type zinc-finger motif lies at 169 to 279 (STCPHTENFQ…SALQIYGINI (111 aa)). 12 residues coordinate Zn(2+): cysteine 171, histidine 173, cysteine 192, cysteine 195, cysteine 204, cysteine 207, cysteine 212, histidine 224, histidine 228, histidine 235, cysteine 253, and cysteine 256. In terms of domain architecture, USP spans 323–781 (CGLINLGNSC…NGYIYFYTRC (459 aa)). Cysteine 332 serves as the catalytic Nucleophile. UBA domains follow at residues 576–626 (DEDE…LFQH) and 649–689 (EVDE…VFNN). Residue histidine 737 is the Proton acceptor of the active site.

The protein belongs to the peptidase C19 family.

It is found in the cytoplasm. It localises to the nucleus. It catalyses the reaction Thiol-dependent hydrolysis of ester, thioester, amide, peptide and isopeptide bonds formed by the C-terminal Gly of ubiquitin (a 76-residue protein attached to proteins as an intracellular targeting signal).. Its function is as follows. Required for the adaptation to the presence of glucose in the growth medium; mediates the degradation of enzymes involved in gluconeogenesis when cells are shifted to glucose-containing medium. Required for proteasome-dependent catabolite degradation of fructose-1,6-bisphosphatase (FBP1). Accelerates proteasomal breakdown of ubiquitinated proteins as it disassembles free ubiquitin chains that would compete with ubiquitinated proteins to bind to the proteasome. The chain is Ubiquitin carboxyl-terminal hydrolase 14 (UBP14) from Saccharomyces cerevisiae (strain ATCC 204508 / S288c) (Baker's yeast).